The primary structure comprises 384 residues: MHAHASRPQARQTTLLRRAALFDFPASADLSPGTEAARHHTIQWLSRFGVFEGHESVAEYDALRFDVLAGLFYPRATGADLNLGSDLVGWYFVFDDQFDGELGSRPEAVARLVADVIRITEEDTAHGRAQDGEGPLLESFRDLWRRISSGRPQVWRDRFRHHWLEYLHSYHREALERTGALPGAGGDAPRSVEAVLALRRHSIGVQPCLDLNEPFGGYTLPPALHGGFPMARMREATDDVVVFTNDIASLDKELAVGDVHNSVIVQWERAGGELEDAVRHIADLANARYRWFEETAARLPALLTEAGADPGTHHAVGRYVDGMRHVMTGNLGWSVRTARYDERGTEAVSGGRQRPWAQLTGAEELIRAGRGAPLPPLGSGSGSR.

Mg(2+)-binding residues include aspartate 95, asparagine 245, serine 249, and glutamate 253.

This sequence belongs to the terpene synthase family. It depends on Mg(2+) as a cofactor.

It catalyses the reaction (2E,6E)-farnesyl diphosphate + H2O = (+)-isoafricanol + diphosphate. In terms of biological role, catalyzes the cyclization of farnesyl diphosphate (FPP) to isoafricanol. This Streptomyces violaceusniger (strain Tu 4113) protein is Isoafricanol synthase.